The primary structure comprises 382 residues: MKITKITTYRLPPRWMFLKIETDEGVVGWGEPVIEGRARTVEAAVHELGDYLIGQDPSRINDLWQVMYRAGFYRGGPILMSAIAGIDQALWDIKGKVLNAPVWQLMGGLVRDKIKAYSWVGGDRPADVIDGIKTLREIGFDTFKLNGCEELGLIDNSRAVDAAVNTVAQIREAFGNQIEFGLDFHGRVSAPMAKVLIKELEPYRPLFIEEPVLAEQAEYYPKLAAQTHIPLAAGERMFSRFDFKRVLEAGGISILQPDLSHAGGITECYKIAGMAEAYDVTLAPHCPLGPIALAACLHIDFVSYNAVLQEQSMGIHYNKGAELLDFVKNKEDFSMVGGFFKPLTKPGLGVEIDEAKVIEFSKNAPDWRNPLWRHEDNSVAEW.

A Mg(2+)-binding site is contributed by Asp-183. Catalysis depends on His-185, which acts as the Proton donor. Residues Glu-209 and Glu-235 each contribute to the Mg(2+) site. The active-site Proton acceptor is His-285.

The protein belongs to the mandelate racemase/muconate lactonizing enzyme family. GalD subfamily. The cofactor is Mg(2+).

It carries out the reaction D-galactonate = 2-dehydro-3-deoxy-D-galactonate + H2O. Its pathway is carbohydrate acid metabolism; D-galactonate degradation; D-glyceraldehyde 3-phosphate and pyruvate from D-galactonate: step 1/3. Functionally, catalyzes the dehydration of D-galactonate to 2-keto-3-deoxy-D-galactonate. The protein is D-galactonate dehydratase of Escherichia coli (strain 55989 / EAEC).